The primary structure comprises 935 residues: Progesterone receptor (935 aa).

The AF3; mediates transcriptional activation stretch occupies residues 1 to 164 (MTELKAKGPR…PATQRVLSPL (164 aa)). Residues 1–256 (MTELKAKGPR…AAAGGGAAAV (256 aa)) form a disordered region. Residues 1–568 (MTELKAKGPR…YSFESLPQKI (568 aa)) are modulating, Pro-Rich. Residue Ser-20 is modified to Phosphoserine. The short motif at 55-59 (LDGLL) is the LXXL motif 1 element. Ser-81 bears the Phosphoserine mark. Positions 115 to 119 (LDTLL) match the LXXL motif 2 motif. 2 positions are modified to phosphoserine: Ser-130 and Ser-162. The mediates transcriptional transrepression stretch occupies residues 165 to 305 (MSRSGGKAGD…LATTTMDFTH (141 aa)). The Nuclear localization signal motif lies at 183-187 (KVLPR). Ser-190 and Ser-213 each carry phosphoserine. Residues 220–231 (EVEEEDGSESED) show a composition bias toward acidic residues. The segment covering 232–246 (SAGPLLKGKPRALGG) has biased composition (low complexity). Ser-294 is subject to Phosphoserine; by MAPK1. The interval 328–353 (SYDGGAGAASAFAPPRSSPSASSTPV) is disordered. The segment covering 335–350 (AASAFAPPRSSPSASS) has biased composition (low complexity). Ser-345 carries the phosphoserine; by MAPK modification. Residue Lys-388 forms a Glycyl lysine isopeptide (Lys-Gly) (interchain with G-Cter in SUMO); alternate linkage. A Glycyl lysine isopeptide (Lys-Gly) (interchain with G-Cter in ubiquitin); alternate cross-link involves residue Lys-388. Residue Ser-400 is modified to Phosphoserine; by CDK2. The interval 415 to 452 (PDFPLGPPPPLPPRAPPSRPGEAAVTAAPAGASVSSAS) is disordered. The segment covering 418-433 (PLGPPPPLPPRAPPSR) has biased composition (pro residues). Over residues 434-452 (PGEAAVTAAPAGASVSSAS) the composition is skewed to low complexity. Residues 456–548 (STLECILYKA…VYPPYLNYLR (93 aa)) form an AF1; mediates transcriptional activation region. A Glycyl lysine isopeptide (Lys-Gly) (interchain with G-Cter in SUMO) cross-link involves residue Lys-533. 2 consecutive NR C4-type zinc fingers follow at residues 569 to 589 (CLICGDEASGCHYGVLTCGSC) and 605 to 629 (CAGRNDCIVDKIRRKNCPACRLRKC). The segment at residues 569–641 (CLICGDEASG…AGMVLGGRKF (73 aa)) is a DNA-binding region (nuclear receptor). A Phosphoserine modification is found at Ser-678. The region spanning 681-915 (QDIQLIPPLI…EFPEMMSEVI (235 aa)) is the NR LBD domain. Positions 689-935 (LINLLVSIEP…MVKPLLFHKK (247 aa)) are AF2; mediates transcriptional activation. Progesterone is bound at residue Arg-768.

This sequence belongs to the nuclear hormone receptor family. Interacts with SMARD1 and UNC45A. Interacts with CUEDC2; the interaction promotes ubiquitination, decreases sumoylation, and represses transcriptional activity. Interacts with PIAS3; the interaction promotes sumoylation of PR in a hormone-dependent manner, inhibits DNA-binding, and alters nuclear export. Interacts with SP1; the interaction requires ligand-induced phosphorylation on Ser-345 by ERK1/2-MAPK. Interacts with PRMT2. Interacts with NCOA2 and NCOA1. Interacts with KLF9. Interacts with GTF2B. Post-translationally, phosphorylated on multiple serine sites. Several of these sites are hormone-dependent. Phosphorylation on Ser-294 is highly hormone-dependent and modulates ubiquitination and sumoylation on Lys-388. Phosphorylation on Ser-345 also requires induction by hormone. Basal phosphorylation on Ser-81, Ser-162, Ser-190 and Ser-400 is increased in response to progesterone and can be phosphorylated in vitro by the CDK2-A1 complex. Increased levels of phosphorylation on Ser-400 also in the presence of EGF, heregulin, IGF, PMA and FBS. Phosphorylation at this site by CDK2 is ligand-independent, and increases nuclear translocation and transcriptional activity. Phosphorylation at Ser-162 and Ser-294, but not at Ser-190, is impaired during the G(2)/M phase of the cell cycle. Phosphorylation on Ser-345 by ERK1/2 MAPK is required for interaction with SP1. Sumoylation is hormone-dependent and represses transcriptional activity. Sumoylation on all three sites is enhanced by PIAS3. Desumoylated by SENP1. Sumoylation on Lys-388, the main site of sumoylation, is repressed by ubiquitination on the same site, and modulated by phosphorylation at Ser-294. In terms of processing, ubiquitination is hormone-dependent and represses sumoylation on the same site. Promoted by MAPK-mediated phosphorylation on Ser-294. Ubiquitinated by UBR5, leading to its degradation: UBR5 specifically recognizes and binds ligand-bound PGR when it is not associated with coactivators (NCOAs). In presence of NCOAs, the UBR5-degron is not accessible, preventing its ubiquitination and degradation. Post-translationally, palmitoylated by ZDHHC7 and ZDHHC21. Palmitoylation is required for plasma membrane targeting and for rapid intracellular signaling via ERK and AKT kinases and cAMP generation.

Its subcellular location is the nucleus. The protein localises to the cytoplasm. The steroid hormones and their receptors are involved in the regulation of eukaryotic gene expression and affect cellular proliferation and differentiation in target tissues. Transcriptional activator of several progesteron-dependent promoters in a variety of cell types. Involved in activation of SRC-dependent MAPK signaling on hormone stimulation. The protein is Progesterone receptor (PGR) of Macaca sylvanus (Barbary macaque).